A 450-amino-acid chain; its full sequence is NADH-quinone oxidoreductase subunit H (450 aa).

The next 9 helical transmembrane spans lie at 18 to 38 (WWLV…TPLL), 91 to 111 (ILAP…IPFG), 128 to 148 (LPVA…GIVL), 169 to 189 (VISY…DAGT), 201 to 221 (HTWY…SMVG), 262 to 282 (VTVS…PFPL), 292 to 312 (WWPV…FVWL), 324 to 344 (FMGL…MIVA), and 358 to 378 (SIAL…LLWK). The tract at residues 387-450 (APEKPVEPRG…TGPTQENSDD (64 aa)) is disordered. Positions 390–400 (KPVEPRGRAEL) are enriched in basic and acidic residues. Residues 433-450 (VSVTGAHSTGPTQENSDD) are compositionally biased toward polar residues.

This sequence belongs to the complex I subunit 1 family. As to quaternary structure, NDH-1 is composed of 14 different subunits. Subunits NuoA, H, J, K, L, M, N constitute the membrane sector of the complex.

The protein resides in the cell membrane. The catalysed reaction is a quinone + NADH + 5 H(+)(in) = a quinol + NAD(+) + 4 H(+)(out). Functionally, NDH-1 shuttles electrons from NADH, via FMN and iron-sulfur (Fe-S) centers, to quinones in the respiratory chain. The immediate electron acceptor for the enzyme in this species is believed to be ubiquinone. Couples the redox reaction to proton translocation (for every two electrons transferred, four hydrogen ions are translocated across the cytoplasmic membrane), and thus conserves the redox energy in a proton gradient. This subunit may bind ubiquinone. In Rhodococcus jostii (strain RHA1), this protein is NADH-quinone oxidoreductase subunit H.